A 438-amino-acid polypeptide reads, in one-letter code: Enolase (438 aa).

Residue Gln174 coordinates (2R)-2-phosphoglycerate. Glu216 (proton donor) is an active-site residue. Residues Asp253, Glu297, and Asp324 each coordinate Mg(2+). Positions 349, 378, 379, and 400 each coordinate (2R)-2-phosphoglycerate. Residue Lys349 is the Proton acceptor of the active site.

The protein belongs to the enolase family. Component of the RNA degradosome, a multiprotein complex involved in RNA processing and mRNA degradation. Requires Mg(2+) as cofactor.

It is found in the cytoplasm. It localises to the secreted. The protein localises to the cell surface. It catalyses the reaction (2R)-2-phosphoglycerate = phosphoenolpyruvate + H2O. Its pathway is carbohydrate degradation; glycolysis; pyruvate from D-glyceraldehyde 3-phosphate: step 4/5. Catalyzes the reversible conversion of 2-phosphoglycerate (2-PG) into phosphoenolpyruvate (PEP). It is essential for the degradation of carbohydrates via glycolysis. This is Enolase from Psychrobacter arcticus (strain DSM 17307 / VKM B-2377 / 273-4).